Here is a 398-residue protein sequence, read N- to C-terminus: Succinyl-diaminopimelate desuccinylase (398 aa).

H73 provides a ligand contact to Zn(2+). D75 is a catalytic residue. D106 is a Zn(2+) binding site. Catalysis depends on E140, which acts as the Proton acceptor. Zn(2+)-binding residues include E141, E169, and H366.

The protein belongs to the peptidase M20A family. DapE subfamily. Homodimer. The cofactor is Zn(2+). Requires Co(2+) as cofactor.

It catalyses the reaction N-succinyl-(2S,6S)-2,6-diaminopimelate + H2O = (2S,6S)-2,6-diaminopimelate + succinate. Its pathway is amino-acid biosynthesis; L-lysine biosynthesis via DAP pathway; LL-2,6-diaminopimelate from (S)-tetrahydrodipicolinate (succinylase route): step 3/3. In terms of biological role, catalyzes the hydrolysis of N-succinyl-L,L-diaminopimelic acid (SDAP), forming succinate and LL-2,6-diaminopimelate (DAP), an intermediate involved in the bacterial biosynthesis of lysine and meso-diaminopimelic acid, an essential component of bacterial cell walls. This chain is Succinyl-diaminopimelate desuccinylase, found in Agrobacterium fabrum (strain C58 / ATCC 33970) (Agrobacterium tumefaciens (strain C58)).